Consider the following 40-residue polypeptide: Photosystem II reaction center protein J (40 aa).

A helical membrane pass occupies residues 8–28; it reads IPLWLIGTVAGIPVIGLVGVF.

This sequence belongs to the PsbJ family. As to quaternary structure, PSII is composed of 1 copy each of membrane proteins PsbA, PsbB, PsbC, PsbD, PsbE, PsbF, PsbH, PsbI, PsbJ, PsbK, PsbL, PsbM, PsbT, PsbX, PsbY, PsbZ, Psb30/Ycf12, at least 3 peripheral proteins of the oxygen-evolving complex and a large number of cofactors. It forms dimeric complexes.

The protein resides in the plastid. The protein localises to the chloroplast thylakoid membrane. Its function is as follows. One of the components of the core complex of photosystem II (PSII). PSII is a light-driven water:plastoquinone oxidoreductase that uses light energy to abstract electrons from H(2)O, generating O(2) and a proton gradient subsequently used for ATP formation. It consists of a core antenna complex that captures photons, and an electron transfer chain that converts photonic excitation into a charge separation. In Hordeum jubatum (Foxtail barley), this protein is Photosystem II reaction center protein J.